The sequence spans 69 residues: DNA-directed RNA polymerase subunit omega (69 aa).

The protein belongs to the RNA polymerase subunit omega family. The RNAP catalytic core consists of 2 alpha, 1 beta, 1 beta' and 1 omega subunit. When a sigma factor is associated with the core the holoenzyme is formed, which can initiate transcription.

It catalyses the reaction RNA(n) + a ribonucleoside 5'-triphosphate = RNA(n+1) + diphosphate. Its function is as follows. Promotes RNA polymerase assembly. Latches the N- and C-terminal regions of the beta' subunit thereby facilitating its interaction with the beta and alpha subunits. This chain is DNA-directed RNA polymerase subunit omega, found in Pelotomaculum thermopropionicum (strain DSM 13744 / JCM 10971 / SI).